A 217-amino-acid chain; its full sequence is Translation initiation factor IF-3 (217 aa).

The interval 179-217 is disordered; it reads PRKTPLVKKEEKEAAPTKAVRTIPAPPRPTAAKVAAQQA.

Belongs to the IF-3 family. In terms of assembly, monomer.

Its subcellular location is the cytoplasm. Functionally, IF-3 binds to the 30S ribosomal subunit and shifts the equilibrium between 70S ribosomes and their 50S and 30S subunits in favor of the free subunits, thus enhancing the availability of 30S subunits on which protein synthesis initiation begins. This is Translation initiation factor IF-3 from Parasynechococcus marenigrum (strain WH8102).